Reading from the N-terminus, the 142-residue chain is Hemoglobin subunit alpha (142 aa).

The Globin domain occupies 2–142; that stretch reads VLSGEDKSNI…VSTVLTSKYR (141 aa). Ser-4 is modified (phosphoserine). N6-succinyllysine is present on residues Lys-8 and Lys-12. Residue Lys-17 is modified to N6-acetyllysine; alternate. Lys-17 bears the N6-succinyllysine; alternate mark. A Phosphotyrosine modification is found at Tyr-25. A Phosphoserine modification is found at Ser-36. Position 41 is an N6-succinyllysine (Lys-41). Ser-50 is modified (phosphoserine). Position 59 (His-59) interacts with O2. Residue His-88 participates in heme b binding. At Ser-103 the chain carries Phosphoserine. Position 109 is a phosphothreonine (Thr-109). A phosphoserine mark is found at Ser-112, Ser-125, and Ser-132. Phosphothreonine occurs at positions 135 and 138. Ser-139 carries the phosphoserine modification.

It belongs to the globin family. As to quaternary structure, heterotetramer of two alpha chains and two beta chains. Red blood cells.

Functionally, involved in oxygen transport from the lung to the various peripheral tissues. In terms of biological role, hemopressin acts as an antagonist peptide of the cannabinoid receptor CNR1. Hemopressin-binding efficiently blocks cannabinoid receptor CNR1 and subsequent signaling. This chain is Hemoglobin subunit alpha (Hba), found in Mus musculus (Mouse).